A 622-amino-acid chain; its full sequence is Probable Xaa-Pro aminopeptidase P (622 aa).

The Mn(2+) site is built by D419, D430, E528, and E542.

This sequence belongs to the peptidase M24B family. Mn(2+) serves as cofactor.

The catalysed reaction is Release of any N-terminal amino acid, including proline, that is linked to proline, even from a dipeptide or tripeptide.. Catalyzes the removal of a penultimate prolyl residue from the N-termini of peptides. This chain is Probable Xaa-Pro aminopeptidase P (AMPP), found in Coprinopsis cinerea (strain Okayama-7 / 130 / ATCC MYA-4618 / FGSC 9003) (Inky cap fungus).